Consider the following 276-residue polypeptide: Release factor glutamine methyltransferase (276 aa).

Residues 116-120, D139, W167, and N182 contribute to the S-adenosyl-L-methionine site; that span reads GTGTG. 182–185 is a substrate binding site; it reads NPPY.

The protein belongs to the protein N5-glutamine methyltransferase family. PrmC subfamily.

The enzyme catalyses L-glutaminyl-[peptide chain release factor] + S-adenosyl-L-methionine = N(5)-methyl-L-glutaminyl-[peptide chain release factor] + S-adenosyl-L-homocysteine + H(+). Functionally, methylates the class 1 translation termination release factors RF1/PrfA and RF2/PrfB on the glutamine residue of the universally conserved GGQ motif. This chain is Release factor glutamine methyltransferase, found in Pseudomonas aeruginosa (strain ATCC 15692 / DSM 22644 / CIP 104116 / JCM 14847 / LMG 12228 / 1C / PRS 101 / PAO1).